Reading from the N-terminus, the 156-residue chain is Small ribosomal subunit protein uS7 (156 aa).

Belongs to the universal ribosomal protein uS7 family. In terms of assembly, part of the 30S ribosomal subunit. Contacts proteins S9 and S11.

Functionally, one of the primary rRNA binding proteins, it binds directly to 16S rRNA where it nucleates assembly of the head domain of the 30S subunit. Is located at the subunit interface close to the decoding center, probably blocks exit of the E-site tRNA. In Renibacterium salmoninarum (strain ATCC 33209 / DSM 20767 / JCM 11484 / NBRC 15589 / NCIMB 2235), this protein is Small ribosomal subunit protein uS7.